The primary structure comprises 214 residues: Phosphoribosylglycinamide formyltransferase (214 aa).

12-14 (GSN) contributes to the N(1)-(5-phospho-beta-D-ribosyl)glycinamide binding site. (6R)-10-formyltetrahydrofolate contacts are provided by residues 105–108 (LLIL) and N123. The active-site Proton donor is the H125. Position 167 (D167) interacts with (6R)-10-formyltetrahydrofolate. E197 lines the N(1)-(5-phospho-beta-D-ribosyl)glycinamide pocket.

This sequence belongs to the GART family.

The catalysed reaction is N(1)-(5-phospho-beta-D-ribosyl)glycinamide + (6R)-10-formyltetrahydrofolate = N(2)-formyl-N(1)-(5-phospho-beta-D-ribosyl)glycinamide + (6S)-5,6,7,8-tetrahydrofolate + H(+). It functions in the pathway purine metabolism; IMP biosynthesis via de novo pathway; N(2)-formyl-N(1)-(5-phospho-D-ribosyl)glycinamide from N(1)-(5-phospho-D-ribosyl)glycinamide (10-formyl THF route): step 1/1. This is Phosphoribosylglycinamide formyltransferase from Saccharomyces cerevisiae (strain ATCC 204508 / S288c) (Baker's yeast).